Here is a 474-residue protein sequence, read N- to C-terminus: tRNA-2-methylthio-N(6)-dimethylallyladenosine synthase (474 aa).

The MTTase N-terminal domain occupies 3–120; the sequence is KKLHIKTWGC…LPDMIEQVRR (118 aa). [4Fe-4S] cluster-binding residues include Cys12, Cys49, Cys83, Cys157, Cys161, and Cys164. The 233-residue stretch at 143–375 folds into the Radical SAM core domain; it reads RAEGPTAFVS…QDRITQQAMR (233 aa). Positions 378–441 constitute a TRAM domain; the sequence is RHMMGTVQRI…TNSLRGKFIR (64 aa).

It belongs to the methylthiotransferase family. MiaB subfamily. In terms of assembly, monomer. [4Fe-4S] cluster serves as cofactor.

Its subcellular location is the cytoplasm. It catalyses the reaction N(6)-dimethylallyladenosine(37) in tRNA + (sulfur carrier)-SH + AH2 + 2 S-adenosyl-L-methionine = 2-methylsulfanyl-N(6)-dimethylallyladenosine(37) in tRNA + (sulfur carrier)-H + 5'-deoxyadenosine + L-methionine + A + S-adenosyl-L-homocysteine + 2 H(+). In terms of biological role, catalyzes the methylthiolation of N6-(dimethylallyl)adenosine (i(6)A), leading to the formation of 2-methylthio-N6-(dimethylallyl)adenosine (ms(2)i(6)A) at position 37 in tRNAs that read codons beginning with uridine. This is tRNA-2-methylthio-N(6)-dimethylallyladenosine synthase from Shewanella sp. (strain MR-4).